A 324-amino-acid chain; its full sequence is tRNA U34 carboxymethyltransferase (324 aa).

Residues Lys91, Trp105, Lys110, Gly130, 152 to 154 (DPS), 181 to 182 (IE), Met196, Tyr200, and Arg315 each bind carboxy-S-adenosyl-L-methionine.

It belongs to the class I-like SAM-binding methyltransferase superfamily. CmoB family. In terms of assembly, homotetramer.

It carries out the reaction carboxy-S-adenosyl-L-methionine + 5-hydroxyuridine(34) in tRNA = 5-carboxymethoxyuridine(34) in tRNA + S-adenosyl-L-homocysteine + H(+). Catalyzes carboxymethyl transfer from carboxy-S-adenosyl-L-methionine (Cx-SAM) to 5-hydroxyuridine (ho5U) to form 5-carboxymethoxyuridine (cmo5U) at position 34 in tRNAs. This is tRNA U34 carboxymethyltransferase from Aliivibrio fischeri (strain MJ11) (Vibrio fischeri).